Consider the following 238-residue polypeptide: Tetrahydromethanopterin S-methyltransferase subunit A 1 (238 aa).

Residues 2–218 (VEKKSPAEGW…RMFAGMYSGK (217 aa)) lie on the Cytoplasmic side of the membrane. Histidine 84 is a 5-hydroxybenzimidazolylcob(I)amide binding site. Residues 219-237 (VQGIMIGLAFTLTLGILLL) traverse the membrane as a helical segment. Valine 238 is a topological domain (extracellular).

This sequence belongs to the MtrA family. The complex is composed of 8 subunits; MtrA, MtrB, MtrC, MtrD, MtrE, MtrF, MtrG and MtrH. 5-hydroxybenzimidazolylcob(I)amide is required as a cofactor.

The protein localises to the cell membrane. The catalysed reaction is 5-methyl-5,6,7,8-tetrahydromethanopterin + coenzyme M + 2 Na(+)(in) = 5,6,7,8-tetrahydromethanopterin + methyl-coenzyme M + 2 Na(+)(out). Its pathway is one-carbon metabolism; methanogenesis from CO(2); methyl-coenzyme M from 5,10-methylene-5,6,7,8-tetrahydromethanopterin: step 2/2. In terms of biological role, part of a complex that catalyzes the formation of methyl-coenzyme M and tetrahydromethanopterin from coenzyme M and methyl-tetrahydromethanopterin. This is an energy-conserving, sodium-ion translocating step. This chain is Tetrahydromethanopterin S-methyltransferase subunit A 1, found in Methanothermobacter marburgensis (strain ATCC BAA-927 / DSM 2133 / JCM 14651 / NBRC 100331 / OCM 82 / Marburg) (Methanobacterium thermoautotrophicum).